A 701-amino-acid polypeptide reads, in one-letter code: Polyribonucleotide nucleotidyltransferase (701 aa).

Mg(2+) contacts are provided by D487 and D493. The 60-residue stretch at 554-613 folds into the KH domain; that stretch reads PTMIAMKIDTDKIRDVIGKGGATIRAICEETKASIDIEDDGSIKIFGESKEAAEAARQRV. The region spanning 623 to 691 is the S1 motif domain; sequence GKIYIGKVER…NRGRIKLSIK (69 aa).

The protein belongs to the polyribonucleotide nucleotidyltransferase family. As to quaternary structure, component of the RNA degradosome, which is a multiprotein complex involved in RNA processing and mRNA degradation. Mg(2+) is required as a cofactor.

It is found in the cytoplasm. The enzyme catalyses RNA(n+1) + phosphate = RNA(n) + a ribonucleoside 5'-diphosphate. In terms of biological role, involved in mRNA degradation. Catalyzes the phosphorolysis of single-stranded polyribonucleotides processively in the 3'- to 5'-direction. The chain is Polyribonucleotide nucleotidyltransferase from Pseudomonas syringae pv. syringae (strain B728a).